Consider the following 576-residue polypeptide: Sodium/hydrogen exchanger 8 (576 aa).

The next 11 helical transmembrane spans lie at 55-75 (MTIF…HLLI), 79-99 (LHFL…GAVI), 118-138 (PNMF…YSLH), 151-171 (LFAV…IYFL), 186-206 (FAFG…IFNA), 256-276 (LGYF…TGLI), 306-326 (GLAE…GIVM), 349-369 (VAFL…FSFP), 374-394 (ISFV…NIFP), 412-432 (MFIM…SLHL), and 446-466 (TTIV…MPLI). The residue at position 505 (Thr-505) is a Phosphothreonine. A phosphoserine mark is found at Ser-566 and Ser-568.

This sequence belongs to the monovalent cation:proton antiporter 1 (CPA1) transporter (TC 2.A.36) family. In terms of tissue distribution, predominantly expressed in the liver, skeletal muscle, kidney, and testis. Expressed in both renal cortex and medulla. Detected throughout the entire gastrointestinal tract, with high expression detected in stomach, duodenum and ascending colon. In gastric epithelium; expressed in the glands within the fundus and pylorus regions.

It localises to the golgi apparatus membrane. Its subcellular location is the golgi apparatus. It is found in the trans-Golgi network membrane. The protein localises to the endosome. The protein resides in the multivesicular body membrane. It localises to the apical cell membrane. Its subcellular location is the cytoplasmic vesicle. It is found in the secretory vesicle. The protein localises to the acrosome. It carries out the reaction Na(+)(in) + H(+)(out) = Na(+)(out) + H(+)(in). Its function is as follows. Na(+)/H(+) antiporter. Mediates the electoneutral exchange of intracellular H(+) ions for extracellular Na(+) in 1:1 stoichiometry. Acts as an Na(+)/H(+) exchanger in the trans-Golgi. Contributes to the regulation of pH regulation of Golgi apparatus, and consequently, in protein trafficking and endosomal morphology. Plays a crucial role in germ cells in acrosome biogenesis and sperm development, probably by playing a role in the fusion of the Golgi-derived vesicles that form the acrosomal cap. Can also be active at the cell surface of specialized cells. In the small intestine, plays a major physiological role in transepithelial absorption of Na(+). Regulates intracellular pH homeostasis of intestinal epithelial cells. Acts as an important regulator of mucosal integrity in the intestine and in the stomach, could mediate the pH fluctuation necessary for mucin exocytosis or assist membrane trafficking of other proteins. Plays a role in photoreceptor survival and in the maintenance of intracellular pH homeostasis in retinal pigment epithelium (RPE cells). The polypeptide is Sodium/hydrogen exchanger 8 (Slc9a8) (Mus musculus (Mouse)).